The chain runs to 207 residues: Putative 3-methyladenine DNA glycosylase (207 aa).

Belongs to the DNA glycosylase MPG family.

The chain is Putative 3-methyladenine DNA glycosylase from Listeria monocytogenes serovar 1/2a (strain ATCC BAA-679 / EGD-e).